A 376-amino-acid chain; its full sequence is Actin-related protein T1 (376 aa).

Belongs to the actin family.

The protein resides in the cytoplasm. It localises to the cytoskeleton. It is found in the nucleus. The protein localises to the cytoplasmic vesicle. Its subcellular location is the secretory vesicle. The protein resides in the acrosome. Its function is as follows. Negatively regulates the Hedgehog (SHH) signaling. Binds to the promoter of the SHH signaling mediator, GLI1, and inhibits its expression. The protein is Actin-related protein T1 (Actrt1) of Mus musculus (Mouse).